We begin with the raw amino-acid sequence, 111 residues long: Prophage-derived-like uncharacterized protein YozM (111 aa).

A signal peptide spans 1-24 (MKKRLIGFLVLVPALIMWGITLIE).

The sequence is that of Prophage-derived-like uncharacterized protein YozM (yozM) from Bacillus subtilis (strain 168).